The primary structure comprises 72 residues: SRY-related protein MG44 (72 aa).

The segment at residues 1–69 (VKRPMNAFMV…KHMADYPNYK (69 aa)) is a DNA-binding region (HMG box).

It localises to the nucleus. In Tarentola mauritanica (Common wall gecko), this protein is SRY-related protein MG44.